Reading from the N-terminus, the 274-residue chain is 2-succinyl-6-hydroxy-2,4-cyclohexadiene-1-carboxylate synthase (274 aa).

It belongs to the AB hydrolase superfamily. MenH family. Monomer.

It carries out the reaction 5-enolpyruvoyl-6-hydroxy-2-succinyl-cyclohex-3-ene-1-carboxylate = (1R,6R)-6-hydroxy-2-succinyl-cyclohexa-2,4-diene-1-carboxylate + pyruvate. The protein operates within quinol/quinone metabolism; 1,4-dihydroxy-2-naphthoate biosynthesis; 1,4-dihydroxy-2-naphthoate from chorismate: step 3/7. Its pathway is quinol/quinone metabolism; menaquinone biosynthesis. Functionally, catalyzes a proton abstraction reaction that results in 2,5-elimination of pyruvate from 2-succinyl-5-enolpyruvyl-6-hydroxy-3-cyclohexene-1-carboxylate (SEPHCHC) and the formation of 2-succinyl-6-hydroxy-2,4-cyclohexadiene-1-carboxylate (SHCHC). The polypeptide is 2-succinyl-6-hydroxy-2,4-cyclohexadiene-1-carboxylate synthase (Yersinia enterocolitica serotype O:8 / biotype 1B (strain NCTC 13174 / 8081)).